Consider the following 412-residue polypeptide: MSIDLEWAKLDSSLANYLVDVLNRQLSNAQRPSFIGPVEVTSLEFGSASPDVELVDLRDIYRDFLEDDEDDSSTSPVKVTEGQLDAHGGEDDDGYEWVPRRAAAREYYTEGGGHGGNGSHLPMHLRHPPLRSSPTDTFSSLGHSMGMTMPVGLDMWTGHGALFHHQGSGGSPALAHGGPILRSPSPSTPFPVVHTPPLGRTPTAAYRSSSALDPDSSFLNQPVFPSQQPQQQQPQQENNHPNLQLHLQVNWHSNLRITITTSLLINYPSPMFMSLPIKLSVTGLVFNGELAVAYEGQRRRVHVCILDDLDPYGPAGDRPKREVDPDTLNDTAITPPDLDEDSPPNSGRPQKPLPIGQRLLPSIFIESEIGQADKHVLKNVTRVERFIQDVIRKTVEEELVFPNFHTLVMGDG.

The region spanning 1–410 (MSIDLEWAKL…FPNFHTLVMG (410 aa)) is the SMP-LTD domain. Disordered regions lie at residues 66–96 (EDDEDDSSTSPVKVTEGQLDAHGGEDDDGYE), 108–136 (YTEGGGHGGNGSHLPMHLRHPPLRSSPTD), 166–238 (QGSG…QQEN), and 314–354 (PAGD…KPLP). The span at 220–238 (NQPVFPSQQPQQQQPQQEN) shows a compositional bias: low complexity.

It belongs to the MDM12 family. As to quaternary structure, component of the ER-mitochondria encounter structure (ERMES) or MDM complex, composed of MMM1, MDM10, MDM12 and MDM34. An MMM1 homodimer associates with one molecule of MDM12 on each side in a pairwise head-to-tail manner, and the SMP-LTD domains of MMM1 and MDM12 generate a continuous hydrophobic tunnel for phospholipid trafficking.

The protein localises to the mitochondrion outer membrane. It is found in the endoplasmic reticulum membrane. In terms of biological role, component of the ERMES/MDM complex, which serves as a molecular tether to connect the endoplasmic reticulum (ER) and mitochondria. Components of this complex are involved in the control of mitochondrial shape and protein biogenesis, and function in nonvesicular lipid trafficking between the ER and mitochondria. MDM12 is required for the interaction of the ER-resident membrane protein MMM1 and the outer mitochondrial membrane-resident beta-barrel protein MDM10. The MDM12-MMM1 subcomplex functions in the major beta-barrel assembly pathway that is responsible for biogenesis of all mitochondrial outer membrane beta-barrel proteins, and acts in a late step after the SAM complex. The MDM10-MDM12-MMM1 subcomplex further acts in the TOM40-specific pathway after the action of the MDM12-MMM1 complex. Essential for establishing and maintaining the structure of mitochondria and maintenance of mtDNA nucleoids. The protein is Mitochondrial distribution and morphology protein 12 of Coprinopsis cinerea (strain Okayama-7 / 130 / ATCC MYA-4618 / FGSC 9003) (Inky cap fungus).